The sequence spans 259 residues: Large ribosomal subunit protein uL4 (259 aa).

The tract at residues 47–67 is disordered; sequence WGTDPMAGKRTTAESFGSGRG.

The protein belongs to the universal ribosomal protein uL4 family. As to quaternary structure, part of the 50S ribosomal subunit.

In terms of biological role, one of the primary rRNA binding proteins, this protein initially binds near the 5'-end of the 23S rRNA. It is important during the early stages of 50S assembly. It makes multiple contacts with different domains of the 23S rRNA in the assembled 50S subunit and ribosome. Its function is as follows. Forms part of the polypeptide exit tunnel. This chain is Large ribosomal subunit protein uL4, found in Methanosphaera stadtmanae (strain ATCC 43021 / DSM 3091 / JCM 11832 / MCB-3).